Here is a 360-residue protein sequence, read N- to C-terminus: Peptide chain release factor 1 (360 aa).

Residue Gln-235 is modified to N5-methylglutamine. Residues 281–307 show a composition bias toward basic and acidic residues; that stretch reads ERQRADSERSADRRSQVGSGDRSERIR. Residues 281–311 are disordered; it reads ERQRADSERSADRRSQVGSGDRSERIRTYNF.

The protein belongs to the prokaryotic/mitochondrial release factor family. Post-translationally, methylated by PrmC. Methylation increases the termination efficiency of RF1.

Its subcellular location is the cytoplasm. Functionally, peptide chain release factor 1 directs the termination of translation in response to the peptide chain termination codons UAG and UAA. The sequence is that of Peptide chain release factor 1 from Rhizobium meliloti (strain 1021) (Ensifer meliloti).